The following is a 177-amino-acid chain: 2-C-methyl-D-erythritol 2,4-cyclodiphosphate synthase (177 aa).

Aspartate 23 and histidine 25 together coordinate a divalent metal cation. 4-CDP-2-C-methyl-D-erythritol 2-phosphate-binding positions include aspartate 23–histidine 25 and histidine 49–serine 50. Histidine 57 is an a divalent metal cation binding site. 4-CDP-2-C-methyl-D-erythritol 2-phosphate is bound by residues aspartate 71–glycine 73, phenylalanine 76–aspartate 80, alanine 115–alanine 121, and arginine 157.

It belongs to the IspF family. Homotrimer. The cofactor is a divalent metal cation.

The enzyme catalyses 4-CDP-2-C-methyl-D-erythritol 2-phosphate = 2-C-methyl-D-erythritol 2,4-cyclic diphosphate + CMP. It participates in isoprenoid biosynthesis; isopentenyl diphosphate biosynthesis via DXP pathway; isopentenyl diphosphate from 1-deoxy-D-xylulose 5-phosphate: step 4/6. Functionally, involved in the biosynthesis of isopentenyl diphosphate (IPP) and dimethylallyl diphosphate (DMAPP), two major building blocks of isoprenoid compounds. Catalyzes the conversion of 4-diphosphocytidyl-2-C-methyl-D-erythritol 2-phosphate (CDP-ME2P) to 2-C-methyl-D-erythritol 2,4-cyclodiphosphate (ME-CPP) with a corresponding release of cytidine 5-monophosphate (CMP). This chain is 2-C-methyl-D-erythritol 2,4-cyclodiphosphate synthase, found in Nitrosospira multiformis (strain ATCC 25196 / NCIMB 11849 / C 71).